The sequence spans 237 residues: tRNA (guanine-N(7)-)-methyltransferase (237 aa).

Glutamate 68, glutamate 93, aspartate 120, and aspartate 143 together coordinate S-adenosyl-L-methionine. Residue aspartate 143 is part of the active site. Substrate contacts are provided by residues lysine 147, aspartate 179, and 216–219 (TKFE).

It belongs to the class I-like SAM-binding methyltransferase superfamily. TrmB family.

The catalysed reaction is guanosine(46) in tRNA + S-adenosyl-L-methionine = N(7)-methylguanosine(46) in tRNA + S-adenosyl-L-homocysteine. It participates in tRNA modification; N(7)-methylguanine-tRNA biosynthesis. Functionally, catalyzes the formation of N(7)-methylguanine at position 46 (m7G46) in tRNA. The protein is tRNA (guanine-N(7)-)-methyltransferase of Shewanella piezotolerans (strain WP3 / JCM 13877).